The primary structure comprises 51 residues: Small polypeptide DEVIL 1 (51 aa).

The interval 1–25 is disordered; that stretch reads MEMKRVMMSSAERSKEKKRSISRRL. A compositionally biased stretch (basic residues) spans 16–25; the sequence is EKKRSISRRL. Residues 20–51 are required for DVL/RTFL small polypeptide activity; that stretch reads SISRRLGKYMKEQKGRIYIIRRCMVMLLCSHD. The helical transmembrane segment at 28–44 threads the bilayer; the sequence is YMKEQKGRIYIIRRCMV.

Belongs to the DVL/RTFL small polypeptides family. In terms of tissue distribution, mostly expressed in leaves and, to a lower extent, in roots and stems.

Its subcellular location is the cell membrane. Its function is as follows. Small polypeptide acting as a regulatory molecule which coordinates cellular responses required for differentiation, growth and development, including leaves shape, pedicule elongation, inflorescence organization and fruit maturation, probably by restricting polar cell proliferation in lateral organs and coordinating socket cell recruitment and differentiation at trichome sites. The polypeptide is Small polypeptide DEVIL 1 (Arabidopsis thaliana (Mouse-ear cress)).